We begin with the raw amino-acid sequence, 243 residues long: MAKVEQVLSLEPQHELKFRGPFTDVVTTNLKLGNPTDRNVCFKVKTTAPRRYCVRPNSGIIDAGASINVSVMLQPFDYDPNEKSKHKFMVQSMFAPADTSDMEAAWKEAKPEDLMDSKLRCVFELPAENDKPHDVEINKIISTTASKTETPVVSKALSSALDDTEVKKVMEECKRLQSEVQRLREENKQLKEEDGLRMRKPVLSNSPAPAPATPGKEEGLSTRLLALVVLFFIVGVIIGKIAL.

At Ala2 the chain carries N-acetylalanine. Residues 2–218 lie on the Cytoplasmic side of the membrane; sequence AKVEQVLSLE…PAPATPGKEE (217 aa). One can recognise an MSP domain in the interval 7 to 124; sequence VLSLEPQHEL…MDSKLRCVFE (118 aa). Ser146 bears the Phosphoserine mark. Lys147 participates in a covalent cross-link: Glycyl lysine isopeptide (Lys-Gly) (interchain with G-Cter in SUMO1). Thr150 is modified (phosphothreonine). A phosphoserine mark is found at Ser158 and Ser159. Positions 161–196 form a coiled coil; it reads LDDTEVKKVMEECKRLQSEVQRLREENKQLKEEDGL. The segment covering 185–197 has biased composition (basic and acidic residues); the sequence is EENKQLKEEDGLR. The tract at residues 185-217 is disordered; that stretch reads EENKQLKEEDGLRMRKPVLSNSPAPAPATPGKE. Position 206 is a phosphoserine (Ser206). Residues 219–239 traverse the membrane as a helical; Anchor for type IV membrane protein segment; that stretch reads GLSTRLLALVVLFFIVGVIIG.

It belongs to the VAMP-associated protein (VAP) (TC 9.B.17) family. In terms of assembly, homodimer, and heterodimer with VAPA. Interacts with VAMP1 and VAMP2. Interacts (via MSP domain) with ZFYVE27. Interacts with RMDN3. Interacts with KIF5A in a ZFYVE27-dependent manner. Interacts (via MSP domain) with STARD3 (via phospho-FFAT motif). Interacts with STARD3NL (via FFAT motif). Interacts with CERT1. Interacts with PLEKHA3 and SACM1L to form a ternary complex. Interacts with VPS13A (via FFAT motif). Interacts with RB1CC1 (via phosphorylated FFAT motif), MIGA2 (via phosphorylated FFAT motif), RMDN3 (via phosphorylated FFAT motif), OSBPL1A (via FFAT motif), KCNB1 (via phosphorylated FFAT motif) and KCNB2 (via phosphorylated FFAT motif). Interacts (via MSP domain) with WDR44 (via FFAT motif); the interactions connect the endoplasmic reticulum (ER) with the endosomal tubule.

Its subcellular location is the endoplasmic reticulum membrane. Endoplasmic reticulum (ER)-anchored protein that mediates the formation of contact sites between the ER and endosomes via interaction with FFAT motif-containing proteins such as STARD3 or WDR44. Interacts with STARD3 in a FFAT motif phosphorylation dependent manner. Via interaction with WDR44 participates in neosynthesized protein export. Participates in the endoplasmic reticulum unfolded protein response (UPR) by inducing ERN1/IRE1 activity. Involved in cellular calcium homeostasis regulation. This is Vesicle-associated membrane protein-associated protein B from Sus scrofa (Pig).